The primary structure comprises 190 residues: Ras-like GTP-binding protein RhoL (190 aa).

GTP is bound at residue 18–25; the sequence is GDGMVGKT. An Effector region motif is present at residues 40-48; that stretch reads YIPTVFDNH. Residues 65 to 69 and 123 to 126 contribute to the GTP site; these read DTAGQ and TKLD. Cysteine methyl ester is present on Cys187. The S-geranylgeranyl cysteine moiety is linked to residue Cys187. A propeptide spans 188–190 (removed in mature form); the sequence is KIL.

It belongs to the small GTPase superfamily. Rho family. In terms of tissue distribution, highly expressed in the embryonic cephalic mesoderm starting from stage 6 and fading by stage 11. Hemocyte precursor cells.

The protein resides in the cell membrane. In terms of biological role, essential for the maturation of hemocytes. The chain is Ras-like GTP-binding protein RhoL (RhoL) from Drosophila melanogaster (Fruit fly).